The following is a 273-amino-acid chain: SPRY domain-containing SOCS box protein 1 (273 aa).

A Phosphotyrosine modification is found at Tyr-31. The B30.2/SPRY domain occupies 33–231 (KPTRLDLLLD…IRMRYLNGLD (199 aa)). Residues 232 to 273 (PEPLPLMDLCRRSVRLALGKERLGAIPALPLPASLKAYLLYQ) enclose the SOCS box domain.

The protein belongs to the SPSB family. Component of the probable ECS(SPSB1) E3 ubiquitin-protein ligase complex which contains CUL5, RNF7/RBX2, Elongin BC complex and SPSB1. Interacts with CUL5, RNF7, ELOB and ELOC. Directly interacts with MET tyrosine kinase domain in the presence and in the absence of HGF, however HGF treatment has a positive effect on this interaction. When phosphorylated, interacts with RASA1 without affecting its stability. Interacts (via B30.2/SPRY domain) with PAWR; this interaction is direct and occurs in association with the Elongin BC complex. Interacts with EPHB2. Interacts with NOS2.

The protein localises to the cytoplasm. It is found in the cytosol. It functions in the pathway protein modification; protein ubiquitination. Functionally, substrate recognition component of a SCF-like ECS (Elongin BC-CUL2/5-SOCS-box protein) E3 ubiquitin-protein ligase complex which mediates the ubiquitination and subsequent proteasomal degradation of target proteins. Negatively regulates nitric oxide (NO) production and limits cellular toxicity in activated macrophages by mediating the ubiquitination and proteasomal degradation of NOS2. Acts as a bridge which links the NOS2 with the ECS E3 ubiquitin ligase complex components ELOC and CUL5. The protein is SPRY domain-containing SOCS box protein 1 (Spsb1) of Mus musculus (Mouse).